A 259-amino-acid chain; its full sequence is Isoprenyl transferase (259 aa).

Residue D30 is part of the active site. D30 is a Mg(2+) binding site. Substrate-binding positions include 31–34, W35, R43, H47, and 75–77; these read GNGR and STE. The active-site Proton acceptor is the N78. Substrate-binding positions include W79, R81, R198, and 204 to 206; that span reads RIS. E217 provides a ligand contact to Mg(2+).

It belongs to the UPP synthase family. As to quaternary structure, homodimer. Requires Mg(2+) as cofactor.

Catalyzes the condensation of isopentenyl diphosphate (IPP) with allylic pyrophosphates generating different type of terpenoids. The sequence is that of Isoprenyl transferase from Caulobacter vibrioides (strain ATCC 19089 / CIP 103742 / CB 15) (Caulobacter crescentus).